The following is a 490-amino-acid chain: Katanin p60 ATPase-containing subunit A-like 1 (490 aa).

Met-1 carries the post-translational modification N-acetylmethionine. Residues 95–184 (DPAVWPPPVP…DGEMPKFDGA (90 aa)) form a disordered region. Residues 116-127 (PNREVRPLRKEM) show a composition bias toward basic and acidic residues. Low complexity predominate over residues 128-139 (AGVGARGPVGRA). Basic and acidic residues predominate over residues 143-169 (SKSEKPSTSRDKDYRARGRDDKGRKNM). A Phosphoserine modification is found at Ser-174. Residue 248-255 (GPPGTGKT) participates in ATP binding.

Belongs to the AAA ATPase family. Katanin p60 subunit A1 subfamily. A-like 1 sub-subfamily. In terms of assembly, interacts with KATNB1 and KATNBL1. Expressed in testis, restricted to Sertoli cells (at protein level).

It is found in the cytoplasm. The protein resides in the cytoskeleton. It localises to the spindle pole. Its subcellular location is the spindle. It carries out the reaction n ATP + n H2O + a microtubule = n ADP + n phosphate + (n+1) alpha/beta tubulin heterodimers.. In terms of biological role, regulates microtubule dynamics in Sertoli cells, a process that is essential for spermiogenesis and male fertility. Severs microtubules in an ATP-dependent manner, promoting rapid reorganization of cellular microtubule arrays. Has microtubule-severing activity in vitro. The protein is Katanin p60 ATPase-containing subunit A-like 1 of Homo sapiens (Human).